The sequence spans 245 residues: MSALFISDLHLCEQRPVTLRAFFAFLQGPARSVQALYILGDLFEYWAGDDDATPLDNAVSDALAALAETGTSLFFLPGNRDFLLGESFARRARLRILPDPTLIDFDNEGVLLSHGDILCTDDEHYQSFRRLVRDPAWQLAFLERPLAQRKQVIEGLRFQSETAKQEKASDIMDVNAFAVETLLREHGYPTLIHGHTHRPAHHVHVVDGRSCERWVLADWHDDAPYLRWDGAGPPVALRFGAKLGT.

5 residues coordinate Mn(2+): Asp8, His10, Asp41, Asn79, and His114. 79 to 80 (NR) serves as a coordination point for substrate. The substrate site is built by Asp122, Ser160, Lys164, Lys167, and His195. Mn(2+) contacts are provided by His195 and His197.

The protein belongs to the LpxH family. Requires Mn(2+) as cofactor.

The protein localises to the cell inner membrane. It carries out the reaction UDP-2-N,3-O-bis[(3R)-3-hydroxytetradecanoyl]-alpha-D-glucosamine + H2O = 2-N,3-O-bis[(3R)-3-hydroxytetradecanoyl]-alpha-D-glucosaminyl 1-phosphate + UMP + 2 H(+). Its pathway is glycolipid biosynthesis; lipid IV(A) biosynthesis; lipid IV(A) from (3R)-3-hydroxytetradecanoyl-[acyl-carrier-protein] and UDP-N-acetyl-alpha-D-glucosamine: step 4/6. Functionally, hydrolyzes the pyrophosphate bond of UDP-2,3-diacylglucosamine to yield 2,3-diacylglucosamine 1-phosphate (lipid X) and UMP by catalyzing the attack of water at the alpha-P atom. Involved in the biosynthesis of lipid A, a phosphorylated glycolipid that anchors the lipopolysaccharide to the outer membrane of the cell. This chain is UDP-2,3-diacylglucosamine hydrolase, found in Aromatoleum aromaticum (strain DSM 19018 / LMG 30748 / EbN1) (Azoarcus sp. (strain EbN1)).